A 570-amino-acid chain; its full sequence is BRICHOS domain-containing protein C09F5.1 (570 aa).

At 1 to 288 the chain is on the cytoplasmic side; the sequence is MVVEQIEVIE…YTPELLRSLC (288 aa). Polar residues-rich tracts occupy residues 93-107 and 228-246; these read SGATNSSFLNTSGDS and TSTLNSRRFPPQSQTSLVS. 2 disordered regions span residues 93-116 and 218-248; these read SGATNSSFLNTSGDSRVSYPGADR and SSWDGDEKKMTSTLNSRRFPPQSQTSLVSRE. Residues 289–309 form a helical membrane-spanning segment; sequence CILLLLLLLLFLMFIIFNAIF. Topologically, residues 310 to 570 are extracellular; that stretch reads NRYAVSEFLL…RKSINNATLV (261 aa). The BRICHOS domain maps to 369-461; the sequence is TAVDFNTGYV…IDDCEGAQWY (93 aa). An intrachain disulfide couples C395 to C455.

The protein resides in the membrane. This is BRICHOS domain-containing protein C09F5.1 from Caenorhabditis elegans.